The primary structure comprises 430 residues: Adenylosuccinate synthetase (430 aa).

GTP contacts are provided by residues 12–18 (GDEGKGK) and 40–42 (GHT). Residue Asp13 is the Proton acceptor of the active site. Mg(2+) is bound by residues Asp13 and Gly40. IMP-binding positions include 13–16 (DEGK), 38–41 (NAGH), Thr130, Arg144, Gln224, Thr239, and Arg303. His41 (proton donor) is an active-site residue. Residue 299–305 (VNTGRKR) participates in substrate binding. GTP-binding positions include Arg305, 331–333 (KLD), and 413–415 (STS).

Belongs to the adenylosuccinate synthetase family. As to quaternary structure, homodimer. The cofactor is Mg(2+).

The protein resides in the cytoplasm. It catalyses the reaction IMP + L-aspartate + GTP = N(6)-(1,2-dicarboxyethyl)-AMP + GDP + phosphate + 2 H(+). It participates in purine metabolism; AMP biosynthesis via de novo pathway; AMP from IMP: step 1/2. In terms of biological role, plays an important role in the de novo pathway of purine nucleotide biosynthesis. Catalyzes the first committed step in the biosynthesis of AMP from IMP. The polypeptide is Adenylosuccinate synthetase (Rhodopseudomonas palustris (strain BisB18)).